Here is a 486-residue protein sequence, read N- to C-terminus: Probable glycine dehydrogenase (decarboxylating) subunit 2 (486 aa).

The residue at position 269 (K269) is an N6-(pyridoxal phosphate)lysine.

Belongs to the GcvP family. C-terminal subunit subfamily. The glycine cleavage system is composed of four proteins: P, T, L and H. In this organism, the P 'protein' is a heterodimer of two subunits. Pyridoxal 5'-phosphate is required as a cofactor.

It catalyses the reaction N(6)-[(R)-lipoyl]-L-lysyl-[glycine-cleavage complex H protein] + glycine + H(+) = N(6)-[(R)-S(8)-aminomethyldihydrolipoyl]-L-lysyl-[glycine-cleavage complex H protein] + CO2. Its function is as follows. The glycine cleavage system catalyzes the degradation of glycine. The P protein binds the alpha-amino group of glycine through its pyridoxal phosphate cofactor; CO(2) is released and the remaining methylamine moiety is then transferred to the lipoamide cofactor of the H protein. The sequence is that of Probable glycine dehydrogenase (decarboxylating) subunit 2 from Chlorobaculum tepidum (strain ATCC 49652 / DSM 12025 / NBRC 103806 / TLS) (Chlorobium tepidum).